We begin with the raw amino-acid sequence, 294 residues long: Phosphatidylserine decarboxylase proenzyme (294 aa).

Residues Asp-113, His-169, and Ser-256 each act as charge relay system; for autoendoproteolytic cleavage activity in the active site. The active-site Schiff-base intermediate with substrate; via pyruvic acid; for decarboxylase activity is the Ser-256. Ser-256 carries the pyruvic acid (Ser); by autocatalysis modification.

This sequence belongs to the phosphatidylserine decarboxylase family. PSD-B subfamily. Prokaryotic type II sub-subfamily. As to quaternary structure, heterodimer of a large membrane-associated beta subunit and a small pyruvoyl-containing alpha subunit. The cofactor is pyruvate. Is synthesized initially as an inactive proenzyme. Formation of the active enzyme involves a self-maturation process in which the active site pyruvoyl group is generated from an internal serine residue via an autocatalytic post-translational modification. Two non-identical subunits are generated from the proenzyme in this reaction, and the pyruvate is formed at the N-terminus of the alpha chain, which is derived from the carboxyl end of the proenzyme. The autoendoproteolytic cleavage occurs by a canonical serine protease mechanism, in which the side chain hydroxyl group of the serine supplies its oxygen atom to form the C-terminus of the beta chain, while the remainder of the serine residue undergoes an oxidative deamination to produce ammonia and the pyruvoyl prosthetic group on the alpha chain. During this reaction, the Ser that is part of the protease active site of the proenzyme becomes the pyruvoyl prosthetic group, which constitutes an essential element of the active site of the mature decarboxylase.

Its subcellular location is the cell membrane. It catalyses the reaction a 1,2-diacyl-sn-glycero-3-phospho-L-serine + H(+) = a 1,2-diacyl-sn-glycero-3-phosphoethanolamine + CO2. It participates in phospholipid metabolism; phosphatidylethanolamine biosynthesis; phosphatidylethanolamine from CDP-diacylglycerol: step 2/2. Catalyzes the formation of phosphatidylethanolamine (PtdEtn) from phosphatidylserine (PtdSer). The sequence is that of Phosphatidylserine decarboxylase proenzyme from Clostridium perfringens (strain SM101 / Type A).